The primary structure comprises 183 residues: Ribosome rescue factor SmrB (183 aa).

The Smr domain maps to 98–173 (LDLHGLTQLQ…GDAALLVLIE (76 aa)).

It belongs to the SmrB family. As to quaternary structure, associates with collided ribosomes, but not with correctly translating polysomes.

Acts as a ribosome collision sensor. Detects stalled/collided disomes (pairs of ribosomes where the leading ribosome is stalled and a second ribosome has collided with it) and endonucleolytically cleaves mRNA at the 5' boundary of the stalled ribosome. Stalled/collided disomes form a new interface (primarily via the 30S subunits) that binds SmrB. Cleaved mRNA becomes available for tmRNA ligation, leading to ribosomal subunit dissociation and rescue of stalled ribosomes. This is Ribosome rescue factor SmrB from Shigella sonnei (strain Ss046).